Here is a 122-residue protein sequence, read N- to C-terminus: Co-chaperonin GroES (122 aa).

Belongs to the GroES chaperonin family. Heptamer of 7 subunits arranged in a ring. Interacts with the chaperonin GroEL.

It localises to the cytoplasm. Together with the chaperonin GroEL, plays an essential role in assisting protein folding. The GroEL-GroES system forms a nano-cage that allows encapsulation of the non-native substrate proteins and provides a physical environment optimized to promote and accelerate protein folding. GroES binds to the apical surface of the GroEL ring, thereby capping the opening of the GroEL channel. The polypeptide is Co-chaperonin GroES (Aquifex aeolicus (strain VF5)).